A 966-amino-acid polypeptide reads, in one-letter code: Probable LIM domain-containing serine/threonine-protein kinase DDB_G0286997 (966 aa).

LIM zinc-binding domains lie at Ser-3–Pro-62 and Lys-63–Pro-120. 2 disordered regions span residues Tyr-208–Asp-291 and Pro-331–Val-588. A compositionally biased stretch (low complexity) spans Ser-211–Pro-231. Residues Asn-232 to Gln-269 are compositionally biased toward polar residues. Composition is skewed to low complexity over residues Pro-270–Ser-284 and Pro-331–Leu-350. A compositionally biased stretch (polar residues) spans Thr-374 to Phe-389. A compositionally biased stretch (pro residues) spans Pro-419–Ser-430. The segment covering Pro-431–Gln-449 has biased composition (low complexity). A compositionally biased stretch (pro residues) spans Lys-490–Leu-511. Residues Ser-513–Asn-526 are compositionally biased toward polar residues. Low complexity predominate over residues Ile-543–Asn-560. Positions Pro-561–Gln-570 are enriched in pro residues. Residues Val-702–Leu-959 enclose the Protein kinase domain. Residues Ile-708–Val-716 and Lys-729 contribute to the ATP site. Asp-825 functions as the Proton acceptor in the catalytic mechanism.

The protein belongs to the protein kinase superfamily. TKL Ser/Thr protein kinase family.

The catalysed reaction is L-seryl-[protein] + ATP = O-phospho-L-seryl-[protein] + ADP + H(+). The enzyme catalyses L-threonyl-[protein] + ATP = O-phospho-L-threonyl-[protein] + ADP + H(+). This is Probable LIM domain-containing serine/threonine-protein kinase DDB_G0286997 from Dictyostelium discoideum (Social amoeba).